Reading from the N-terminus, the 83-residue chain is Bowman-Birk type proteinase inhibitor C-II (83 aa).

A propeptide spanning residues 1–7 (MELNLFK) is cleaved from the precursor. Disulfide bonds link Cys-21–Cys-75, Cys-22–Cys-37, Cys-25–Cys-71, Cys-27–Cys-35, Cys-45–Cys-52, Cys-49–Cys-64, and Cys-54–Cys-62.

The protein belongs to the Bowman-Birk serine protease inhibitor family.

This chain is Bowman-Birk type proteinase inhibitor C-II, found in Glycine max (Soybean).